A 272-amino-acid polypeptide reads, in one-letter code: Undecaprenyl-diphosphatase (272 aa).

Helical transmembrane passes span 6-26, 45-65, 89-109, 115-135, 156-176, 189-209, 221-241, and 251-271; these read SLLVAAILGIVEGLTEFLPVS, AKTFEVVIQLGSILAVVVMFW, LSLIHILLGMVPAVVLGLVFH, LFNPINVMYALVVGGVLLIIA, AFFIGCFQCLALWPGFSRSGA, YAASEFSFLLAVPMMMGATAL, ADLPMFAVGFVTAFVVALVAI, and ISFIPFAIYRFIVAAAVFAVF.

It belongs to the UppP family.

The protein localises to the cell inner membrane. The catalysed reaction is di-trans,octa-cis-undecaprenyl diphosphate + H2O = di-trans,octa-cis-undecaprenyl phosphate + phosphate + H(+). Catalyzes the dephosphorylation of undecaprenyl diphosphate (UPP). Confers resistance to bacitracin. This Cronobacter sakazakii (strain ATCC BAA-894) (Enterobacter sakazakii) protein is Undecaprenyl-diphosphatase.